The chain runs to 744 residues: Scytalone dehydratase-like protein Arp1 (744 aa).

Tyr621 is a substrate binding site. Catalysis depends on residues His656 and His681. Asn702 provides a ligand contact to substrate.

It belongs to the scytalone dehydratase family. Homotrimer. Each subunit contains an active site, located in the central part of the hydrophobic core of the monomer, which functions independently.

Scytalone dehydratase-like protein; part of the Pks2 gene cluster that mediates the formation of infectious structures (appressoria), enabling these fungi to kill insects faster. The product of the Pks2 gene cluster is different from the one of Pks1 and has still not been identified. This is Scytalone dehydratase-like protein Arp1 from Metarhizium brunneum (strain ARSEF 3297).